A 64-amino-acid polypeptide reads, in one-letter code: Large ribosomal subunit protein bL28 (64 aa).

Belongs to the bacterial ribosomal protein bL28 family.

The sequence is that of Large ribosomal subunit protein bL28 from Campylobacter jejuni subsp. jejuni serotype O:6 (strain 81116 / NCTC 11828).